We begin with the raw amino-acid sequence, 492 residues long: Ethanolamine-phosphate phospho-lyase (492 aa).

K280 carries the post-translational modification N6-(pyridoxal phosphate)lysine. A disordered region spans residues 462 to 492 (ASDENGLVHPSNGNSHKHTSTIPLSKKTKRN).

The protein belongs to the class-III pyridoxal-phosphate-dependent aminotransferase family. In terms of assembly, homotetramer. It depends on pyridoxal 5'-phosphate as a cofactor.

The protein resides in the mitochondrion. The catalysed reaction is phosphoethanolamine + H2O = acetaldehyde + NH4(+) + phosphate. In terms of biological role, catalyzes the pyridoxal-phosphate-dependent breakdown of phosphoethanolamine, converting it to ammonia, inorganic phosphate and acetaldehyde. In Danio rerio (Zebrafish), this protein is Ethanolamine-phosphate phospho-lyase (etnppl).